The following is a 140-amino-acid chain: Relaxin-3 (140 aa).

The N-terminal stretch at 1 to 23 is a signal peptide; sequence MATRGLLLASWALLGALVLQAEA. 3 disulfide bridges follow: cysteine 33–cysteine 127, cysteine 45–cysteine 140, and cysteine 126–cysteine 131. The propeptide at 53–116 is connecting peptide; it reads ADILAHDPLG…GSPGVVRGSR (64 aa).

This sequence belongs to the insulin family. Heterodimer of a B chain and an A chain linked by two disulfide bonds. As to expression, highly abundant expression is detected in neurons within the ventomedial dorsal tegmental nucleus and the laterally central gray alpha of the pons. Also detected at much lower levels within the hippocampus.

The protein resides in the secreted. May play a role in neuropeptide signaling processes. Ligand for LGR7, relaxin-3 receptor-1 and relaxin-3 receptor-2. The chain is Relaxin-3 (Rln3) from Rattus norvegicus (Rat).